A 971-amino-acid polypeptide reads, in one-letter code: Kinesin-like protein KIN-6 (971 aa).

Disordered regions lie at residues 1–44 (MEEK…SSLA) and 93–121 (TTTT…RNPE). Residues 29 to 39 (ATPFTTTTKPP) are compositionally biased toward low complexity. The region spanning 76-460 (SLKIFLRIKP…LRQASPYMKI (385 aa)) is the Kinesin motor domain. 202-209 (GPSGSGKT) is a binding site for ATP. Residues 700–709 (RREAGSEESS) show a composition bias toward basic and acidic residues. 2 disordered regions span residues 700–856 (RREA…TEEM) and 872–917 (KTTN…RLQP). Residues 768 to 783 (QSVNSEENVGIPSTIT) are compositionally biased toward polar residues. Residues 785–797 (VEAEVTDFQRDQN) show a composition bias toward basic and acidic residues. Over residues 809-827 (EVSQDCINSGLSNVQTKSA) the composition is skewed to polar residues. The span at 831 to 842 (RFPDSEKQERNR) shows a compositional bias: basic and acidic residues. A compositionally biased stretch (basic residues) spans 903-915 (KKQKNGQKPKRRL).

This sequence belongs to the TRAFAC class myosin-kinesin ATPase superfamily. Kinesin family. KIN-6 subfamily.

The chain is Kinesin-like protein KIN-6 from Arabidopsis thaliana (Mouse-ear cress).